The chain runs to 494 residues: Pre-hexon-linking protein IIIa (494 aa).

The tract at residues 1–101 (MAALSPTVRA…ALLQRVGRYN (101 aa)) is peripentonal hexon-tethering domain. The binding to hexon-linking protein stretch occupies residues 132–245 (GSLVALNGFL…FTDSRTVNGD (114 aa)). Thr-268 carries the post-translational modification Phosphothreonine; by host. Residues Ser-439 and Ser-456 each carry the phosphoserine; by host modification. Residues 484–494 (TNPFKHLQPQF) constitute a propeptide that is removed on maturation.

It belongs to the adenoviridae hexon-linking protein IIIa family. Interacts with hexon proteins; this interaction tethers the peripentonal hexons to hexons situated in the facet. Interacts with the penton protein (via N-terminus). Interacts with packaging protein 3; this interaction is required to promote correct genome packaging. Post-translationally, cleaved near the C-terminus by the viral protease during virion maturation to form the mature protein.

It localises to the virion. The protein resides in the host nucleus. Structural component of the virion that acts as a cement protein on the capsid exterior which mediates the interactions between the hexons, including the peripentonal hexons, and reaches all the way to the penton vertices. Two hexon linking proteins IIIa, one from each facet, stabilize the unique edge interface between a pair of facets. As the virus enters the host cell, hexon linking proteins IIIa are shed concomitant with virion acidification in the endosome. During virus assembly, seems to play a role in the serotype specificity of the packaging of viral DNA via its interaction with packaging protein 3. The polypeptide is Pre-hexon-linking protein IIIa (Murine adenovirus A serotype 1 (MAdV-1)).